The sequence spans 432 residues: Enolase (432 aa).

Q167 is a binding site for (2R)-2-phosphoglycerate. E209 acts as the Proton donor in catalysis. Positions 246, 290, and 317 each coordinate Mg(2+). (2R)-2-phosphoglycerate-binding residues include K342, R371, S372, and K393. The active-site Proton acceptor is the K342.

It belongs to the enolase family. In terms of assembly, component of the RNA degradosome, a multiprotein complex involved in RNA processing and mRNA degradation. The cofactor is Mg(2+).

It localises to the cytoplasm. It is found in the secreted. Its subcellular location is the cell surface. It catalyses the reaction (2R)-2-phosphoglycerate = phosphoenolpyruvate + H2O. Its pathway is carbohydrate degradation; glycolysis; pyruvate from D-glyceraldehyde 3-phosphate: step 4/5. Catalyzes the reversible conversion of 2-phosphoglycerate (2-PG) into phosphoenolpyruvate (PEP). It is essential for the degradation of carbohydrates via glycolysis. The polypeptide is Enolase (Klebsiella pneumoniae (strain 342)).